The primary structure comprises 162 residues: Heat shock protein beta-6 (162 aa).

The interval 1-72 (MEIPVPVQPS…PTAQVSTDSG (72 aa)) is involved in stabilization of the HSPB1:HSBP6 heterodimer. Ser16 bears the Phosphoserine mark. A sHSP domain is found at 56–162 (RAPSVALPTA…AQLPSPPAAK (107 aa)). Gln66 is subject to Deamidated glutamine. Ser157 is subject to Phosphoserine.

The protein belongs to the small heat shock protein (HSP20) family. As to quaternary structure, homodimer. Small heat shock proteins form high molecular mass oligomers containing variable number of monomers; these oligomers display a very flexible quaternary structure easily exchanging their subunits. Heterooligomer with HSPB1; formed through oligomerization of HSPB1:HSBP6 dimers; subunit exchange leads to formation of at least two different heterooligomeric complexes, differing in variable quantities of HSPB1 and HSPB6 homodimers in addition to HSPB1:HSPB6 heterodimers. Heterooligomer with CRYAB; large heterooligomers consist of CRYAB homodimers and HSPB5:HSPB6 heterodimers but lacking HSPB6 homodimers. Interacts with BAG3. Interacts (phosphorylated) with YWHAZ. Interacts with PDE4A and PDE4D; required for maintenance of the non-phosphorylated state of HSPB6 under basal conditions. Interacts with KDR. Interacts with PRKD1. Post-translationally, phosphorylated at Ser-16 by PKA and probably PKD1K; required to protect cardiomyocytes from apoptosis.

It is found in the cytoplasm. Its subcellular location is the nucleus. The protein localises to the secreted. Functionally, small heat shock protein which functions as a molecular chaperone probably maintaining denatured proteins in a folding-competent state. Seems to have versatile functions in various biological processes. Plays a role in regulating muscle function such as smooth muscle vasorelaxation and cardiac myocyte contractility. May regulate myocardial angiogenesis implicating KDR. Overexpression mediates cardioprotection and angiogenesis after induced damage. Stabilizes monomeric YWHAZ thereby supporting YWHAZ chaperone-like activity. This Mus musculus (Mouse) protein is Heat shock protein beta-6 (Hspb6).